The following is a 319-amino-acid chain: MSILVAGLTLVSAFLITFLLMPSLIRYFRAKKEGQQIREEGPTWHEKKAGTPTMGGLLFILSAALTCGWVGAWQGQLNGTLGALLFTLIAYGLIGMWDDSIKIFNHQNEGFKPWQKFLAQVVGAMVFAVIYQHEGFQMGFGLTDWGWFYALFIIFWMVGFSNAVNLTDGLDGLVTGLATISFAAYLVLALVQGQTEVALFCLAMIGTLLGFFPFNHKPAKIFMGDMGSLALGASLAAVALVLHHEWSLLIIGIVYVLETLSVILQVAYFRRTGKRLFKMTPIHHTFEMMGWSEWKIDGVFWLVGLIAGALTVATILFLG.

10 helical membrane-spanning segments follow: residues 1–21 (MSIL…FLLM), 53–73 (TMGG…VGAW), 77–97 (LNGT…IGMW), 117–137 (FLAQ…EGFQ), 140–160 (FGLT…MVGF), 172–192 (GLVT…ALVQ), 195–215 (TEVA…FPFN), 221–241 (IFMG…VALV), 249–269 (LIIG…VAYF), and 298–318 (GVFW…ILFL).

Belongs to the glycosyltransferase 4 family. MraY subfamily. The cofactor is Mg(2+).

The protein localises to the cell membrane. It catalyses the reaction UDP-N-acetyl-alpha-D-muramoyl-L-alanyl-gamma-D-glutamyl-L-lysyl-D-alanyl-D-alanine + di-trans,octa-cis-undecaprenyl phosphate = Mur2Ac(oyl-L-Ala-gamma-D-Glu-L-Lys-D-Ala-D-Ala)-di-trans,octa-cis-undecaprenyl diphosphate + UMP. The protein operates within cell wall biogenesis; peptidoglycan biosynthesis. Catalyzes the initial step of the lipid cycle reactions in the biosynthesis of the cell wall peptidoglycan: transfers peptidoglycan precursor phospho-MurNAc-pentapeptide from UDP-MurNAc-pentapeptide onto the lipid carrier undecaprenyl phosphate, yielding undecaprenyl-pyrophosphoryl-MurNAc-pentapeptide, known as lipid I. This is Phospho-N-acetylmuramoyl-pentapeptide-transferase from Limosilactobacillus fermentum (strain NBRC 3956 / LMG 18251) (Lactobacillus fermentum).